The sequence spans 154 residues: 6,7-dimethyl-8-ribityllumazine synthase (154 aa).

Residues Trp-22, 56–58, and 80–82 contribute to the 5-amino-6-(D-ribitylamino)uracil site; these read SHE and AVI. Residue 85 to 86 participates in (2S)-2-hydroxy-3-oxobutyl phosphate binding; that stretch reads DT. His-88 serves as the catalytic Proton donor. Phe-113 lines the 5-amino-6-(D-ribitylamino)uracil pocket. Arg-127 is a (2S)-2-hydroxy-3-oxobutyl phosphate binding site.

This sequence belongs to the DMRL synthase family.

It catalyses the reaction (2S)-2-hydroxy-3-oxobutyl phosphate + 5-amino-6-(D-ribitylamino)uracil = 6,7-dimethyl-8-(1-D-ribityl)lumazine + phosphate + 2 H2O + H(+). It participates in cofactor biosynthesis; riboflavin biosynthesis; riboflavin from 2-hydroxy-3-oxobutyl phosphate and 5-amino-6-(D-ribitylamino)uracil: step 1/2. Its function is as follows. Catalyzes the formation of 6,7-dimethyl-8-ribityllumazine by condensation of 5-amino-6-(D-ribitylamino)uracil with 3,4-dihydroxy-2-butanone 4-phosphate. This is the penultimate step in the biosynthesis of riboflavin. The protein is 6,7-dimethyl-8-ribityllumazine synthase of Deinococcus geothermalis (strain DSM 11300 / CIP 105573 / AG-3a).